Consider the following 209-residue polypeptide: Ribosomal RNA large subunit methyltransferase E (209 aa).

S-adenosyl-L-methionine-binding residues include G63, W65, D83, D99, and D124. K164 serves as the catalytic Proton acceptor.

Belongs to the class I-like SAM-binding methyltransferase superfamily. RNA methyltransferase RlmE family.

It localises to the cytoplasm. It catalyses the reaction uridine(2552) in 23S rRNA + S-adenosyl-L-methionine = 2'-O-methyluridine(2552) in 23S rRNA + S-adenosyl-L-homocysteine + H(+). Functionally, specifically methylates the uridine in position 2552 of 23S rRNA at the 2'-O position of the ribose in the fully assembled 50S ribosomal subunit. The sequence is that of Ribosomal RNA large subunit methyltransferase E from Photobacterium profundum (strain SS9).